A 169-amino-acid polypeptide reads, in one-letter code: uncharacterized protein (169 aa).

Its subcellular location is the mitochondrion. This is an uncharacterized protein from Paramecium tetraurelia.